Here is a 202-residue protein sequence, read N- to C-terminus: Small ribosomal subunit protein uS4 (202 aa).

One can recognise an S4 RNA-binding domain in the interval 94-157; that stretch reads SRLDSLVYRA…LEMPLIKNTL (64 aa).

The protein belongs to the universal ribosomal protein uS4 family. Part of the 30S ribosomal subunit. Contacts protein S5. The interaction surface between S4 and S5 is involved in control of translational fidelity.

One of the primary rRNA binding proteins, it binds directly to 16S rRNA where it nucleates assembly of the body of the 30S subunit. In terms of biological role, with S5 and S12 plays an important role in translational accuracy. In Ureaplasma urealyticum serovar 10 (strain ATCC 33699 / Western), this protein is Small ribosomal subunit protein uS4.